Reading from the N-terminus, the 265-residue chain is Putative hydro-lyase PA2116 (265 aa).

The protein belongs to the D-glutamate cyclase family.

In Pseudomonas aeruginosa (strain ATCC 15692 / DSM 22644 / CIP 104116 / JCM 14847 / LMG 12228 / 1C / PRS 101 / PAO1), this protein is Putative hydro-lyase PA2116.